Here is an 832-residue protein sequence, read N- to C-terminus: Histone acetyltransferase KAT2B (832 aa).

A compositionally biased stretch (gly residues) spans 1–22 (MSEAGGAGPGGCGAGAGAGAGP). Disordered stretches follow at residues 1–54 (MSEA…ACGP) and 395–436 (SYNS…DSHV). Over residues 24–39 (ALPPQPAALPPAPPQG) the composition is skewed to pro residues. Low complexity predominate over residues 40–54 (SPCAAAAGGSGACGP). Positions 395 to 413 (SYNSTSSSLEQPNAGSSSP) are enriched in polar residues. A compositionally biased stretch (basic and acidic residues) spans 425 to 436 (PGEKRKMTDSHV). The region spanning 503-651 (LNQKPNKKIL…GATLMGCELN (149 aa)) is the N-acetyltransferase domain. The active-site Proton donor/acceptor is the E570. Residues 574–576 (CAV), 581–587 (QVKGYGT), and 612–615 (YAIG) contribute to the acetyl-CoA site. The segment at 706–725 (IRETGWKPSGKEKSKEPRDP) is disordered. Residues 714-725 (SGKEKSKEPRDP) show a composition bias toward basic and acidic residues. A Bromo domain is found at 723-827 (RDPDQLYSTL…KFFFSKIKEA (105 aa)).

Belongs to the acetyltransferase family. GCN5 subfamily. Interacts with SIRT1. Interacts (unsumoylated form) with NR2C1; the interaction promotes transactivation activity. Interacts with EP300, CREBBP and DDX17. Interacts with NCOA1 and NCOA3. Component of a large chromatin remodeling complex, at least composed of MYSM1, KAT2B/PCAF, RBM10 and KIF11/TRIP5. Interacts with NR2C2 (hypophosphorylated and unsumoylated form); the interaction promotes the transactivation activity of NR2C2. Interacts with KLF1; the interaction does not acetylate KLF1 and there is no enhancement of its transactivational activity. Interacts with NFE4. Interacts with MECOM. Interacts with E2F1; the interaction acetylates E2F1 augmenting its DNA-binding and transcriptional activity. Interacts with NPAS2, BMAL1 and CLOCK. Interacts with BCAS3. Interacts with CEBPB. Interacts with NR4A3. Interacts with NFATC2. Interacts with TBX5. Interacts with PLK4. Interacts with RB1; this interaction leads to RB1 acetylation. Interacts with VRK1. In terms of assembly, (Microbial infection) Interacts with and acetylates HIV-1 Tat. As to quaternary structure, (Microbial infection) Interacts with HTLV-1 Tax. As to expression, ubiquitously expressed but most abundant in heart and skeletal muscle. Also expressed in the skin, in keratinocytes (at protein level).

It is found in the nucleus. The protein resides in the cytoplasm. The protein localises to the cytoskeleton. It localises to the microtubule organizing center. Its subcellular location is the centrosome. The enzyme catalyses L-lysyl-[histone] + acetyl-CoA = N(6)-acetyl-L-lysyl-[histone] + CoA + H(+). It carries out the reaction L-lysyl-[protein] + acetyl-CoA = N(6)-acetyl-L-lysyl-[protein] + CoA + H(+). The catalysed reaction is spermidine + acetyl-CoA = N(8)-acetylspermidine + CoA + H(+). Activated in vitro by very low concentrations of spermidine, but inhibited at spermidine concentrations higher than 4 uM. The activating effect of low spermidine concentrations may be mediated by N(8)-acetylspermidine produced by KAT2B/P/CAF itself acting as a positive feedback loop. Functions as a histone acetyltransferase (HAT) to promote transcriptional activation. Has significant histone acetyltransferase activity with core histones (H3 and H4), and also with nucleosome core particles. Has a a strong preference for acetylation of H3 at 'Lys-9' (H3K9ac). Also acetylates non-histone proteins, such as ACLY, MAPRE1/EB1, PLK4, RRP9/U3-55K and TBX5. Inhibits cell-cycle progression and counteracts the mitogenic activity of the adenoviral oncoprotein E1A. Acts as a circadian transcriptional coactivator which enhances the activity of the circadian transcriptional activators: NPAS2-BMAL1 and CLOCK-BMAL1 heterodimers. Involved in heart and limb development by mediating acetylation of TBX5, acetylation regulating nucleocytoplasmic shuttling of TBX5. Acts as a negative regulator of centrosome amplification by mediating acetylation of PLK4. Acetylates RRP9/U3-55K, a core subunit of the U3 snoRNP complex, impairing pre-rRNA processing. Acetylates MAPRE1/EB1, promoting dynamic kinetochore-microtubule interactions in early mitosis. Also acetylates spermidine. Functionally, (Microbial infection) In case of HIV-1 infection, it is recruited by the viral protein Tat. Regulates Tat's transactivating activity and may help inducing chromatin remodeling of proviral genes. The protein is Histone acetyltransferase KAT2B of Homo sapiens (Human).